Here is a 1224-residue protein sequence, read N- to C-terminus: Cytosolic carboxypeptidase 1 (1224 aa).

The segment at 361–398 is disordered; the sequence is PPDVDDVVDESDDNDDAETESEIETEDDKDQNFKNDDI. Over residues 363-389 the composition is skewed to acidic residues; it reads DVDDVVDESDDNDDAETESEIETEDDK. A Peptidase M14 domain is found at 846-1136; it reads YPYTYSTLKM…KFCVGLLRLK (291 aa). Residues His-918, Glu-921, and His-1015 each coordinate Zn(2+). Residue Glu-1100 is the Proton donor/acceptor of the active site. The span at 1186–1197 shows a compositional bias: acidic residues; that stretch reads SAESNDDQDAEL. Positions 1186-1224 are disordered; that stretch reads SAESNDDQDAELADNVGDYEANNQEDGLSDSDSTRILLS. The segment covering 1206–1224 has biased composition (polar residues); sequence ANNQEDGLSDSDSTRILLS.

The protein belongs to the peptidase M14 family. Zn(2+) is required as a cofactor.

Its subcellular location is the cytoplasm. It localises to the cytosol. It is found in the nucleus. The protein localises to the mitochondrion. It catalyses the reaction (L-glutamyl)(n+1)-gamma-L-glutamyl-L-glutamyl-[protein] + H2O = (L-glutamyl)(n)-gamma-L-glutamyl-L-glutamyl-[protein] + L-glutamate. The catalysed reaction is C-terminal L-alpha-aminoacyl-L-glutamyl-L-glutamyl-[tubulin] + H2O = C-terminal L-alpha-aminoacyl-L-glutamyl-[tubulin] + L-glutamate. Its function is as follows. Metallocarboxypeptidase that mediates protein deglutamylation of tubulin and non-tubulin target proteins. Catalyzes the removal of polyglutamate side chains present on the gamma-carboxyl group of glutamate residues within the C-terminal tail of alpha- and beta-tubulin. Specifically cleaves tubulin long-side-chains, while it is not able to remove the branching point glutamate. Also catalyzes the removal of polyglutamate residues from the carboxy-terminus of alpha-tubulin as well as non-tubulin proteins. The sequence is that of Cytosolic carboxypeptidase 1 (AGTPBP1) from Gallus gallus (Chicken).